Consider the following 168-residue polypeptide: Photosystem I assembly protein Ycf3 (168 aa).

TPR repeat units follow at residues 35 to 68 (AFTYYRDGMSAQSEGNYAEALQNYYEATRPEIDP), 72 to 105 (SYILYNIGLIHTSNGEHTKALEYYFRALERNPFL), and 120 to 153 (GEQAILQGDSEIAEAWFDQAAEYWKQAIALTPGN).

This sequence belongs to the Ycf3 family.

It localises to the plastid. The protein resides in the chloroplast thylakoid membrane. In terms of biological role, essential for the assembly of the photosystem I (PSI) complex. May act as a chaperone-like factor to guide the assembly of the PSI subunits. This Phalaenopsis aphrodite subsp. formosana (Moth orchid) protein is Photosystem I assembly protein Ycf3.